The sequence spans 100 residues: Urease subunit gamma (100 aa).

The protein belongs to the urease gamma subunit family. In terms of assembly, heterotrimer of UreA (gamma), UreB (beta) and UreC (alpha) subunits. Three heterotrimers associate to form the active enzyme.

It localises to the cytoplasm. It carries out the reaction urea + 2 H2O + H(+) = hydrogencarbonate + 2 NH4(+). It participates in nitrogen metabolism; urea degradation; CO(2) and NH(3) from urea (urease route): step 1/1. The protein is Urease subunit gamma of Thioalkalivibrio sulfidiphilus (strain HL-EbGR7).